A 316-amino-acid polypeptide reads, in one-letter code: Putative transketolase C-terminal section (316 aa).

This sequence belongs to the transketolase family. The cofactor is thiamine diphosphate.

It carries out the reaction D-sedoheptulose 7-phosphate + D-glyceraldehyde 3-phosphate = aldehydo-D-ribose 5-phosphate + D-xylulose 5-phosphate. The protein is Putative transketolase C-terminal section of Methanocaldococcus jannaschii (strain ATCC 43067 / DSM 2661 / JAL-1 / JCM 10045 / NBRC 100440) (Methanococcus jannaschii).